The chain runs to 166 residues: Regulatory protein RecX (166 aa).

The protein belongs to the RecX family.

The protein localises to the cytoplasm. In terms of biological role, modulates RecA activity. This Salmonella paratyphi A (strain ATCC 9150 / SARB42) protein is Regulatory protein RecX.